We begin with the raw amino-acid sequence, 445 residues long: MSTFIGQLVGFAAIVFLVWRYVVPPVRRMMAARQDTVRQQLADAATAAVRLTESTTAHSKAVEAAKAEAEQVVAEAKEEAKRITAQMQTQAGVEAERIKVQGSRQVELLRTQLTRQLRLELGHESVRQASELVRNHVSDPGQQAATVDRFLDELDAMAPAAAEVERPVAAKMRSASRRALGSLVDKFAGLAKGLDNAALSALASGLVSVAQLLQREVIVTRYLTVPAEDAAPRIRLLERLISGQVGNPALDILRAAVTERWSASSDLIDAIEHVSRQALLEVAQRDGQVDEVEDQLFRFSRILDAQPRLSILLGDYVVPAEGRVGLLRKVLDSAGSVNPIAVALLSQTVELLRGQPAEEAALLLAEVAVARRGEVVAQVSAAAELSDAQRTRVTEVLSRIYGHPVTVQLQTDPTLLGGLSIAVGDEVIDGTLSSRLTAAEAQLPD.

Residues M1–V168 are ATP synthase subunit b. Residues F4–P24 form a helical membrane-spanning segment. Positions A169–D445 are ATP synthase subunit delta.

This sequence in the N-terminal section; belongs to the ATPase B chain family. The protein in the C-terminal section; belongs to the ATPase delta chain family. As to quaternary structure, F-type ATPases have 2 components, F(1) - the catalytic core - and F(0) - the membrane proton channel. F(1) has five subunits: alpha(3), beta(3), gamma(1), delta(1), epsilon(1). F(0) has three main subunits: a(1), b(2) and c(10-14). The alpha and beta chains form an alternating ring which encloses part of the gamma chain. F(1) is attached to F(0) by a central stalk formed by the gamma and epsilon chains, while a peripheral stalk is formed by the delta and b chains.

The protein localises to the cell membrane. Functionally, f(1)F(0) ATP synthase produces ATP from ADP in the presence of a proton or sodium gradient. F-type ATPases consist of two structural domains, F(1) containing the extramembraneous catalytic core and F(0) containing the membrane proton channel, linked together by a central stalk and a peripheral stalk. During catalysis, ATP synthesis in the catalytic domain of F(1) is coupled via a rotary mechanism of the central stalk subunits to proton translocation. In terms of biological role, this fusion protein includes a component of the F(0) channel (subunit b) and of the F(1) subunit (subunit delta). Two copies of subunit b and one of delta together form the peripheral 'stator' stalk which links F(1) to F(0). The sequence is that of ATP synthase subunit b-delta (atpFH) from Mycobacterium ulcerans (strain Agy99).